We begin with the raw amino-acid sequence, 826 residues long: Prominin-1-A (826 aa).

Helical transmembrane passes span 50-70, 106-126, and 153-173; these read YYEP…LFVV, VVCA…GLLF, and LLTT…LCAY. 6 N-linked (GlcNAc...) asparagine glycosylation sites follow: Asn-178, Asn-268, Asn-286, Asn-327, Asn-388, and Asn-404. The next 2 helical transmembrane spans lie at 439-459 and 483-503; these read CMIV…ILGF and VGFS…LFLA. 4 N-linked (GlcNAc...) asparagine glycosylation sites follow: Asn-576, Asn-582, Asn-617, and Asn-693.

This sequence belongs to the prominin family.

Its subcellular location is the apical cell membrane. It localises to the cell projection. It is found in the microvillus membrane. The protein localises to the endoplasmic reticulum. The protein resides in the endoplasmic reticulum-Golgi intermediate compartment. Functionally, may play a role in cell differentiation, proliferation and apoptosis. Binds cholesterol in cholesterol-containing plasma membrane microdomains and may play a role in the organization of the apical plasma membrane in epithelial cells. Involved in regulation of MAPK and Akt signaling pathways. The polypeptide is Prominin-1-A (prom1a) (Danio rerio (Zebrafish)).